The chain runs to 176 residues: Thiol-disulfide oxidoreductase ResA (176 aa).

The helical; Signal-anchor for type II membrane protein transmembrane segment at 11–30 (LSILAVISVALGYTFYSNFF) threads the bilayer. The region spanning 36 to 176 (ARAGEQAVNF…EFMELIKPEA (141 aa)) is the Thioredoxin domain. An intrachain disulfide couples Cys74 to Cys77.

This sequence belongs to the thioredoxin family. ResA subfamily.

It localises to the cell membrane. The protein operates within protein modification; cytochrome c assembly. Thiol-disulfide oxidoreductase which is required in disulfide reduction during c-type cytochrome synthesis. May accept reducing equivalents from CcdA, leading to breakage of disulfide bonds in apocytochrome c; following this reduction heme can be covalently attached. In Halalkalibacterium halodurans (strain ATCC BAA-125 / DSM 18197 / FERM 7344 / JCM 9153 / C-125) (Bacillus halodurans), this protein is Thiol-disulfide oxidoreductase ResA.